Consider the following 193-residue polypeptide: Large ribosomal subunit protein bL25 (193 aa).

It belongs to the bacterial ribosomal protein bL25 family. CTC subfamily. In terms of assembly, part of the 50S ribosomal subunit; part of the 5S rRNA/L5/L18/L25 subcomplex. Contacts the 5S rRNA. Binds to the 5S rRNA independently of L5 and L18.

Functionally, this is one of the proteins that binds to the 5S RNA in the ribosome where it forms part of the central protuberance. This chain is Large ribosomal subunit protein bL25, found in Hydrogenovibrio crunogenus (strain DSM 25203 / XCL-2) (Thiomicrospira crunogena).